The primary structure comprises 244 residues: Adenosylcobinamide-GDP ribazoletransferase (244 aa).

5 helical membrane passes run 31–51 (LLFYPVVGLLFGLLLWLASHL), 55–75 (APAPLHAALLLALWVLLSGAL), 109–129 (IAVVVLVLVLLLKFCALWVLV), 134–154 (GGWLVLAPVVGRAAMLGLFMG), and 188–208 (VVLGGSPGLWMLLLSLGVFLW).

This sequence belongs to the CobS family. It depends on Mg(2+) as a cofactor.

The protein resides in the cell inner membrane. It catalyses the reaction alpha-ribazole + adenosylcob(III)inamide-GDP = adenosylcob(III)alamin + GMP + H(+). The catalysed reaction is alpha-ribazole 5'-phosphate + adenosylcob(III)inamide-GDP = adenosylcob(III)alamin 5'-phosphate + GMP + H(+). Its pathway is cofactor biosynthesis; adenosylcobalamin biosynthesis; adenosylcobalamin from cob(II)yrinate a,c-diamide: step 7/7. Joins adenosylcobinamide-GDP and alpha-ribazole to generate adenosylcobalamin (Ado-cobalamin). Also synthesizes adenosylcobalamin 5'-phosphate from adenosylcobinamide-GDP and alpha-ribazole 5'-phosphate. The sequence is that of Adenosylcobinamide-GDP ribazoletransferase from Pseudomonas entomophila (strain L48).